The chain runs to 442 residues: Methionine aminopeptidase 2 (442 aa).

The tract at residues 1 to 81 (MAAQAPTEAL…APTAQSDPPR (81 aa)) is disordered. Over residues 56–72 (PLRRRRRRRRTRKKKKA) the composition is skewed to basic residues. Residue H196 participates in substrate binding. D216, D227, and H296 together coordinate a divalent metal cation. H304 serves as a coordination point for substrate. 2 residues coordinate a divalent metal cation: E329 and E423.

Belongs to the peptidase M24A family. Methionine aminopeptidase eukaryotic type 2 subfamily. Co(2+) serves as cofactor. It depends on Zn(2+) as a cofactor. Requires Mn(2+) as cofactor. Fe(2+) is required as a cofactor.

The protein resides in the cytoplasm. The catalysed reaction is Release of N-terminal amino acids, preferentially methionine, from peptides and arylamides.. Functionally, cotranslationally removes the N-terminal methionine from nascent proteins. The N-terminal methionine is often cleaved when the second residue in the primary sequence is small and uncharged (Met-Ala-, Cys, Gly, Pro, Ser, Thr, or Val). In Verticillium alfalfae (strain VaMs.102 / ATCC MYA-4576 / FGSC 10136) (Verticillium wilt of alfalfa), this protein is Methionine aminopeptidase 2.